A 660-amino-acid polypeptide reads, in one-letter code: Acetyl-coenzyme A synthetase (660 aa).

Residues 197–200 (RGGK) and threonine 317 contribute to the CoA site. ATP is bound by residues 397–399 (GEP), 421–426 (DTWWQT), aspartate 512, and arginine 528. Serine 536 contributes to the CoA binding site. Arginine 539 serves as a coordination point for ATP. The Mg(2+) site is built by valine 550, histidine 552, and valine 555. An N6-acetyllysine modification is found at lysine 625.

This sequence belongs to the ATP-dependent AMP-binding enzyme family. The cofactor is Mg(2+). Acetylated. Deacetylation by the SIR2-homolog deacetylase activates the enzyme.

The enzyme catalyses acetate + ATP + CoA = acetyl-CoA + AMP + diphosphate. Catalyzes the conversion of acetate into acetyl-CoA (AcCoA), an essential intermediate at the junction of anabolic and catabolic pathways. AcsA undergoes a two-step reaction. In the first half reaction, AcsA combines acetate with ATP to form acetyl-adenylate (AcAMP) intermediate. In the second half reaction, it can then transfer the acetyl group from AcAMP to the sulfhydryl group of CoA, forming the product AcCoA. This is Acetyl-coenzyme A synthetase from Burkholderia thailandensis (strain ATCC 700388 / DSM 13276 / CCUG 48851 / CIP 106301 / E264).